Here is a 322-residue protein sequence, read N- to C-terminus: uncharacterized protein (322 aa).

2 stretches are compositionally biased toward basic residues: residues 1–16 and 43–61; these read MPGN…KSGT and LRPH…RRPV. A disordered region spans residues 1-69; that stretch reads MPGNSRRRGA…PVKRADETET (69 aa). Residues Gly-261, Ile-281, and Leu-290 each coordinate S-adenosyl-L-methionine.

The protein belongs to the class IV-like SAM-binding methyltransferase superfamily. RNA methyltransferase TrmH family.

This is an uncharacterized protein from Mycobacterium bovis (strain BCG / Pasteur 1173P2).